We begin with the raw amino-acid sequence, 221 residues long: Putative 5'(3')-deoxyribonucleotidase R824 (221 aa).

The Mg(2+) site is built by Asp16 and Asp18. The Nucleophile role is filled by Asp18. 3 residues coordinate phosphate: Asp18, Ser103, and Lys138. Residue Asp149 coordinates Mg(2+).

Belongs to the 5'(3')-deoxyribonucleotidase family. It depends on Mg(2+) as a cofactor.

Dephosphorylates the 5' and 2'(3')-phosphates of deoxyribonucleotides. The protein is Putative 5'(3')-deoxyribonucleotidase R824 of Acanthamoeba polyphaga mimivirus (APMV).